We begin with the raw amino-acid sequence, 455 residues long: L-serine dehydratase (455 aa).

This sequence belongs to the iron-sulfur dependent L-serine dehydratase family. [4Fe-4S] cluster is required as a cofactor.

The enzyme catalyses L-serine = pyruvate + NH4(+). It functions in the pathway carbohydrate biosynthesis; gluconeogenesis. The protein is L-serine dehydratase (sdaA) of Haemophilus influenzae (strain ATCC 51907 / DSM 11121 / KW20 / Rd).